The primary structure comprises 186 residues: MFMILIINNHGQYNHRIHRTLRYLQIPSELVPNTTPLDEIISRDPEGLILGGGPSLERSGNCVEYIQKLEIPILGICLGHQLIAKAYGGEVATAEAESYAQIELEILDEDDIFRGLGPRMSVWASHKDEVKKLPDEFDVLATSSICEVEAMKHHDKPVYGIQFHPEVHHTREGHRVFENFYDVCRS.

The Glutamine amidotransferase type-1 domain occupies 3-186 (MILIINNHGQ…FENFYDVCRS (184 aa)). The active-site Nucleophile is the Cys77. Catalysis depends on residues His164 and Glu166.

Heterodimer composed of a glutamine amidotransferase subunit (A) and a GMP-binding subunit (B).

It carries out the reaction XMP + L-glutamine + ATP + H2O = GMP + L-glutamate + AMP + diphosphate + 2 H(+). It participates in purine metabolism; GMP biosynthesis; GMP from XMP (L-Gln route): step 1/1. Its function is as follows. Catalyzes the synthesis of GMP from XMP. The polypeptide is GMP synthase [glutamine-hydrolyzing] subunit A (Methanothermobacter thermautotrophicus (strain ATCC 29096 / DSM 1053 / JCM 10044 / NBRC 100330 / Delta H) (Methanobacterium thermoautotrophicum)).